A 427-amino-acid chain; its full sequence is Serine--tRNA ligase (427 aa).

L-serine is bound at residue threonine 231–glutamate 233. An ATP-binding site is contributed by arginine 262–glutamate 264. Glutamate 285 is an L-serine binding site. An ATP-binding site is contributed by glutamate 349–serine 352. Serine 385 provides a ligand contact to L-serine.

This sequence belongs to the class-II aminoacyl-tRNA synthetase family. Type-1 seryl-tRNA synthetase subfamily. Homodimer. The tRNA molecule binds across the dimer.

It is found in the cytoplasm. It catalyses the reaction tRNA(Ser) + L-serine + ATP = L-seryl-tRNA(Ser) + AMP + diphosphate + H(+). The enzyme catalyses tRNA(Sec) + L-serine + ATP = L-seryl-tRNA(Sec) + AMP + diphosphate + H(+). It functions in the pathway aminoacyl-tRNA biosynthesis; selenocysteinyl-tRNA(Sec) biosynthesis; L-seryl-tRNA(Sec) from L-serine and tRNA(Sec): step 1/1. In terms of biological role, catalyzes the attachment of serine to tRNA(Ser). Is also able to aminoacylate tRNA(Sec) with serine, to form the misacylated tRNA L-seryl-tRNA(Sec), which will be further converted into selenocysteinyl-tRNA(Sec). The polypeptide is Serine--tRNA ligase (Sinorhizobium fredii (strain NBRC 101917 / NGR234)).